The primary structure comprises 145 residues: Probable flagellum biosynthesis repressor protein FlbT (145 aa).

It belongs to the FlbT family.

Functionally, has a post-transcriptional repressor function in flagellum biogenesis. Associates with the 5'-UTR of fljK mRNA and promotes its degradation. This chain is Probable flagellum biosynthesis repressor protein FlbT, found in Chelativorans sp. (strain BNC1).